The chain runs to 273 residues: Serine acetyltransferase (273 aa).

It belongs to the transferase hexapeptide repeat family. As to quaternary structure, homohexamer. Dimer of a homotrimer.

It is found in the cytoplasm. It carries out the reaction L-serine + acetyl-CoA = O-acetyl-L-serine + CoA. The protein operates within amino-acid biosynthesis; L-cysteine biosynthesis; L-cysteine from L-serine: step 1/2. The polypeptide is Serine acetyltransferase (cysE) (Shigella flexneri).